A 367-amino-acid chain; its full sequence is Aminomethyltransferase (367 aa).

This sequence belongs to the GcvT family. As to quaternary structure, the glycine cleavage system is composed of four proteins: P, T, L and H.

The enzyme catalyses N(6)-[(R)-S(8)-aminomethyldihydrolipoyl]-L-lysyl-[protein] + (6S)-5,6,7,8-tetrahydrofolate = N(6)-[(R)-dihydrolipoyl]-L-lysyl-[protein] + (6R)-5,10-methylene-5,6,7,8-tetrahydrofolate + NH4(+). Its function is as follows. The glycine cleavage system catalyzes the degradation of glycine. The sequence is that of Aminomethyltransferase from Shouchella clausii (strain KSM-K16) (Alkalihalobacillus clausii).